A 99-amino-acid chain; its full sequence is High mobility group nucleosome-binding domain-containing protein 3 (99 aa).

2 stretches are compositionally biased toward basic and acidic residues: residues 1-25 and 39-53; these read MPKR…EPTR and PESK…KEPG. The interval 1-99 is disordered; that stretch reads MPKRKSPENT…RTESIEKEGE (99 aa). Position 6 is a phosphoserine (Ser6). Thr10 is subject to Phosphothreonine. Phosphoserine occurs at positions 78 and 93. Over residues 83–99 the composition is skewed to basic and acidic residues; it reads TKVEEAQRTESIEKEGE.

This sequence belongs to the HMGN family. As to quaternary structure, interacts with the ligand binding domain of the thyroid receptor (TR) (in vitro). Requires the presence of thyroid hormone for its interaction. Interacts with transcriptional regulator SEHBP. Interacts with nucleosomes. Expressed in the brain, eye, prostate, thyroid, kidney, testis, glial cells and insulin-producing cells of the Langerhans pancreatic islets. In the brain, expressed in the lateral olfactory tract, anterior commissure, corpus callosum, internal capsule, fornix, stria medullans, optic tract, axon bundles, Purkinje cell layer and granular layer of the cerebellum. In retina, expressed in the nuclei of cells in the inner nuclear layer including amacrine, bipolar and horizontal neurons and in the nuclei of ganglion neurons. Detected at low levels in the liver.

The protein resides in the nucleus. In terms of biological role, binds to nucleosomes, regulating chromatin structure and consequently, chromatin-dependent processes such as transcription, DNA replication and DNA repair. Affects both insulin and glucagon levels and modulates the expression of pancreatic genes involved in insulin secretion. Regulates the expression of the glucose transporter SLC2A2 by binding specifically to its promoter region and recruiting PDX1 and additional transcription factors. Regulates the expression of SLC6A9, a glycine transporter which regulates the glycine concentration in synaptic junctions in the central nervous system, by binding to its transcription start site. May play a role in ocular development and astrocyte function. In Mus musculus (Mouse), this protein is High mobility group nucleosome-binding domain-containing protein 3 (Hmgn3).